The chain runs to 540 residues: Sensory neuron membrane protein 1 (540 aa).

Topologically, residues 1–105 (MRTDDPVIGN…WIFRPDLSKP (105 aa)) are cytoplasmic. A helical membrane pass occupies residues 106–126 (LTGDEMITIPHPLILGALLMV). The Extracellular segment spans residues 127-436 (QRDREAMMPL…YTLFLGLRFN (310 aa)). N193 and N206 each carry an N-linked (GlcNAc...) asparagine glycan. Intrachain disulfides connect C245/C310, C274/C330, and C312/C319. The N-linked (GlcNAc...) asparagine glycan is linked to N418. The chain crosses the membrane as a helical span at residues 437 to 457 (TAVKWLTIIIGTIGTIVGGFM). At 458–540 (HYKRTTKMVN…VTVTEMQERY (83 aa)) the chain is on the cytoplasmic side.

It belongs to the CD36 family.

It is found in the cell membrane. Its function is as follows. Plays an olfactory role that is not restricted to pheromone sensitivity. The protein is Sensory neuron membrane protein 1 of Aedes aegypti (Yellowfever mosquito).